The primary structure comprises 377 residues: Guanine nucleotide-binding protein subunit beta-1 (377 aa).

WD repeat units follow at residues 63 to 93, 105 to 135, 154 to 185, 202 to 233, 246 to 276, 293 to 323, and 339 to 369; these read GHTG…IVWN, LPCA…SIFN, GHKG…VLWD, GHTA…RLWD, GHEG…RLFD, GDIP…YVWD, and SHEG…KIWA.

The protein belongs to the WD repeat G protein beta family. In terms of assembly, g proteins are composed of 3 units, alpha, beta and gamma.

In terms of biological role, guanine nucleotide-binding proteins (G proteins) are involved as a modulator or transducer in various transmembrane signaling systems. The beta and gamma chains are required for the GTPase activity, for replacement of GDP by GTP, and for G protein-effector interaction. The chain is Guanine nucleotide-binding protein subunit beta-1 from Nicotiana tabacum (Common tobacco).